Here is a 230-residue protein sequence, read N- to C-terminus: Cysteine S-methyltransferase OspZ (230 aa).

Residues 49–52 (GITR) are interaction with host proteins TAB2, TAB3 and ZRANB3. Residues alanine 92, serine 98, arginine 107, glutamine 111, tyrosine 204, and glutamate 208 each contribute to the S-adenosyl-L-methionine site.

It belongs to the NleE/OspZ family. In terms of assembly, monomer.

It is found in the secreted. It localises to the host cytoplasm. The protein localises to the host nucleus. The catalysed reaction is L-cysteinyl-[protein] + S-adenosyl-L-methionine = S-methyl-L-cysteinyl-[protein] + S-adenosyl-L-homocysteine + H(+). In terms of biological role, cysteine methyltransferase effector that inhibits host cell NF-kappa-B activation by preventing nuclear translocation of host protein RELA/p65. Acts by mediating cysteine methylation of host proteins TAB2 and TAB3: methylation of a conserved cysteine residue of the RanBP2-type zinc finger (NZF) of TAB2 and TAB3 disrupts zinc-binding, thereby inactivating the ubiquitin chain-binding activity of TAB2 and TAB3, leading to NF-kappa-B inactivation. Also mediates cysteine methylation of host protein ZRANB3, inactivating its ability to bind ubiquitin chains. The protein is Cysteine S-methyltransferase OspZ of Shigella flexneri.